The sequence spans 57 residues: UPF0391 membrane protein RPD_3366 (57 aa).

The next 2 membrane-spanning stretches (helical) occupy residues 4-24 and 30-50; these read WVVT…GGIA and IAKV…VVGL.

This sequence belongs to the UPF0391 family.

The protein localises to the cell membrane. The chain is UPF0391 membrane protein RPD_3366 from Rhodopseudomonas palustris (strain BisB5).